A 426-amino-acid chain; its full sequence is Serine protease HTRA2, mitochondrial (426 aa).

Positions 31–58 (SSTCNSTNTDNGSHNTNYNSSNNNNNNN) are enriched in low complexity. The segment at 31 to 59 (SSTCNSTNTDNGSHNTNYNSSNNNNNNND) is disordered. A helical transmembrane segment spans residues 71-87 (FLVPFSLGALASSVVAG). The IAP-binding motif lies at 79-82 (ALAS). A serine protease region spans residues 143-306 (SNGSGFVIEQ…IPIDYVKLFL (164 aa)). Catalysis depends on charge relay system residues His161, Asp193, and Ser270. A PDZ domain is found at 329-414 (MGITMLTLTP…DLDMVILRGV (86 aa)).

Belongs to the peptidase S1C family. In terms of assembly, interacts with th/DIAP1 (via BIR 2 domain).

It localises to the mitochondrion intermembrane space. Its subcellular location is the mitochondrion membrane. It carries out the reaction Cleavage of non-polar aliphatic amino-acids at the P1 position, with a preference for Val, Ile and Met. At the P2 and P3 positions, Arg is selected most strongly with a secondary preference for other hydrophilic residues.. Its function is as follows. Serine protease that shows proteolytic activity against a non-specific substrate beta-casein. Promotes or induces cell death either by direct binding to and inhibition of BIRC proteins (also called inhibitor of apoptosis proteins, IAPs), leading to an increase in caspase activity, or by a BIRC inhibition-independent, caspase-independent and serine protease activity-dependent mechanism. Can antagonize antiapoptotic activity of th/Diap1 by directly inducing the degradation of th/Diap1. This chain is Serine protease HTRA2, mitochondrial, found in Drosophila grimshawi (Hawaiian fruit fly).